Reading from the N-terminus, the 380-residue chain is Beta sliding clamp (380 aa).

The protein belongs to the beta sliding clamp family. As to quaternary structure, forms a ring-shaped head-to-tail homodimer around DNA which binds and tethers DNA polymerases and other proteins to the DNA. The DNA replisome complex has a single clamp-loading complex (3 tau and 1 each of delta, delta', psi and chi subunits) which binds 3 Pol III cores (1 core on the leading strand and 2 on the lagging strand) each with a beta sliding clamp dimer. Additional proteins in the replisome are other copies of gamma, psi and chi, Ssb, DNA helicase and RNA primase.

It is found in the cytoplasm. Confers DNA tethering and processivity to DNA polymerases and other proteins. Acts as a clamp, forming a ring around DNA (a reaction catalyzed by the clamp-loading complex) which diffuses in an ATP-independent manner freely and bidirectionally along dsDNA. Initially characterized for its ability to contact the catalytic subunit of DNA polymerase III (Pol III), a complex, multichain enzyme responsible for most of the replicative synthesis in bacteria; Pol III exhibits 3'-5' exonuclease proofreading activity. The beta chain is required for initiation of replication as well as for processivity of DNA replication. This chain is Beta sliding clamp (dnaN), found in Mycoplasma pneumoniae (strain ATCC 29342 / M129 / Subtype 1) (Mycoplasmoides pneumoniae).